A 316-amino-acid chain; its full sequence is Ribonuclease Z (316 aa).

His63, His65, Asp67, His68, His143, Asp213, and His271 together coordinate Zn(2+). Asp67 (proton acceptor) is an active-site residue.

Belongs to the RNase Z family. In terms of assembly, homodimer. Requires Zn(2+) as cofactor.

It catalyses the reaction Endonucleolytic cleavage of RNA, removing extra 3' nucleotides from tRNA precursor, generating 3' termini of tRNAs. A 3'-hydroxy group is left at the tRNA terminus and a 5'-phosphoryl group is left at the trailer molecule.. In terms of biological role, zinc phosphodiesterase, which displays some tRNA 3'-processing endonuclease activity. Probably involved in tRNA maturation, by removing a 3'-trailer from precursor tRNA. In Bacteroides thetaiotaomicron (strain ATCC 29148 / DSM 2079 / JCM 5827 / CCUG 10774 / NCTC 10582 / VPI-5482 / E50), this protein is Ribonuclease Z.